A 241-amino-acid chain; its full sequence is Small ribosomal subunit protein uS2 (241 aa).

This sequence belongs to the universal ribosomal protein uS2 family.

This is Small ribosomal subunit protein uS2 from Shigella flexneri serotype 5b (strain 8401).